A 217-amino-acid chain; its full sequence is Ribonuclease T (217 aa).

The 176-residue stretch at 20–195 (VVVDVETAGL…YDTERTAMLF (176 aa)) folds into the Exonuclease domain. Mg(2+) contacts are provided by aspartate 23, glutamate 25, histidine 182, and aspartate 187. Histidine 182 (proton donor/acceptor) is an active-site residue.

The protein belongs to the RNase T family. In terms of assembly, homodimer. Mg(2+) is required as a cofactor.

Trims short 3' overhangs of a variety of RNA species, leaving a one or two nucleotide 3' overhang. Responsible for the end-turnover of tRNA: specifically removes the terminal AMP residue from uncharged tRNA (tRNA-C-C-A). Also appears to be involved in tRNA biosynthesis. This chain is Ribonuclease T, found in Blochmanniella pennsylvanica (strain BPEN).